We begin with the raw amino-acid sequence, 166 residues long: Prorelaxin H2 (166 aa).

The N-terminal stretch at 1–5 is a signal peptide; sequence SRAVA. 3 cysteine pairs are disulfide-bonded: Cys16/Cys153, Cys28/Cys166, and Cys152/Cys157. A propeptide spans 37 to 138 (connecting peptide); it reads SLSQEDAPQT…LKYLGLDTHS (102 aa).

It belongs to the insulin family. In terms of assembly, heterodimer of a B chain and an A chain linked by two disulfide bonds. In terms of tissue distribution, expressed in the corpus luteum of pregnancy and in the placenta.

The protein resides in the secreted. Functionally, relaxin is an ovarian hormone that acts with estrogen to produce dilatation of the birth canal in many mammals. May be involved in remodeling of connective tissues during pregnancy, promoting growth of pubic ligaments and ripening of the cervix. The polypeptide is Prorelaxin H2 (RNL2) (Pan troglodytes (Chimpanzee)).